A 331-amino-acid chain; its full sequence is POU domain, class 4, transcription factor 3 (331 aa).

Over residues 81–97 (TSSSSTVPISHPSSNLP) the composition is skewed to low complexity. The segment at 81–108 (TSSSSTVPISHPSSNLPSHHHHHLSHQT) is disordered. Residues 172 to 249 (DVESDPRELE…VLQAWLEEAE (78 aa)) enclose the POU-specific domain. Positions 267 to 326 (RKRKRTSIAAPEKRSLEAYFAIQPRPSSEKIAAIAEKLDLKKNVVRVWFCNQRQKQKRMK) form a DNA-binding region, homeobox.

The protein belongs to the POU transcription factor family. Class-4 subfamily. In terms of assembly, interaction with ISL1. Expressed in the nervous system. Expressed in the otic vesicle during embryogenesis. Expressed in the adult retina in a subset of retinal ganglion cells (RGCs), and at a lower level in the adult tectum. Not expressed in the adult olfactory bulb.

It is found in the nucleus. The protein resides in the cytoplasm. Its function is as follows. Acts as a transcriptional activator. Acts by binding to sequences related to the consensus octamer motif 5'-ATGCAAAT-3' in the regulatory regions of its target genes. May play a role in specifying terminally differentiated neuronal phenotypes. The sequence is that of POU domain, class 4, transcription factor 3 (pou4f3) from Danio rerio (Zebrafish).